Reading from the N-terminus, the 379-residue chain is Glutamate 5-kinase (379 aa).

An ATP-binding site is contributed by Lys15. Ser56, Asp143, and Asn155 together coordinate substrate. Position 175-176 (175-176) interacts with ATP; sequence SD. Positions 281-358 constitute a PUA domain; the sequence is RGTLAIDAGA…SDAAQLLGVR (78 aa).

It belongs to the glutamate 5-kinase family.

It localises to the cytoplasm. The catalysed reaction is L-glutamate + ATP = L-glutamyl 5-phosphate + ADP. Its pathway is amino-acid biosynthesis; L-proline biosynthesis; L-glutamate 5-semialdehyde from L-glutamate: step 1/2. Its function is as follows. Catalyzes the transfer of a phosphate group to glutamate to form L-glutamate 5-phosphate. In Nitrobacter winogradskyi (strain ATCC 25391 / DSM 10237 / CIP 104748 / NCIMB 11846 / Nb-255), this protein is Glutamate 5-kinase.